We begin with the raw amino-acid sequence, 60 residues long: Large ribosomal subunit protein uL30 (60 aa).

The protein belongs to the universal ribosomal protein uL30 family. Part of the 50S ribosomal subunit.

This chain is Large ribosomal subunit protein uL30, found in Saccharopolyspora erythraea (strain ATCC 11635 / DSM 40517 / JCM 4748 / NBRC 13426 / NCIMB 8594 / NRRL 2338).